Reading from the N-terminus, the 677-residue chain is Vertnin (677 aa).

Disordered regions lie at residues 356–376 and 458–490; these read GSTG…SSPE and HSGS…KLSP. The span at 458-472 shows a compositional bias: basic and acidic residues; sequence HSGSSEEGSDADKSQ.

Belongs to the vertnin family.

The protein resides in the nucleus. Functions as a transcriptional repressor that modulates bmp2b expression during dorsoventral patterning. In Danio rerio (Zebrafish), this protein is Vertnin (vrtn).